Here is a 211-residue protein sequence, read N- to C-terminus: Probable GTP-binding protein EngB (211 aa).

Residues 21 to 205 (LMATIVFVGR…KNRIYEIIRE (185 aa)) enclose the EngB-type G domain. GTP-binding positions include 29–36 (GRSNVGKS), 54–58 (GVTRK), 71–74 (DMPG), 151–154 (NKLD), and 184–186 (ISA). The Mg(2+) site is built by S36 and T56.

It belongs to the TRAFAC class TrmE-Era-EngA-EngB-Septin-like GTPase superfamily. EngB GTPase family. The cofactor is Mg(2+).

In terms of biological role, necessary for normal cell division and for the maintenance of normal septation. The polypeptide is Probable GTP-binding protein EngB (Pyrococcus abyssi (strain GE5 / Orsay)).